A 98-amino-acid chain; its full sequence is Large ribosomal subunit protein uL23 (98 aa).

Belongs to the universal ribosomal protein uL23 family. As to quaternary structure, part of the 50S ribosomal subunit. Contacts protein L29, and trigger factor when it is bound to the ribosome.

Its function is as follows. One of the early assembly proteins it binds 23S rRNA. One of the proteins that surrounds the polypeptide exit tunnel on the outside of the ribosome. Forms the main docking site for trigger factor binding to the ribosome. This is Large ribosomal subunit protein uL23 from Limosilactobacillus reuteri (strain DSM 20016) (Lactobacillus reuteri).